The following is a 367-amino-acid chain: RYamide receptor (367 aa).

Residues 1 to 35 are Extracellular-facing; that stretch reads MDANTTRNESFSLDCELVNPNSTLANVYFLSAVYS. N-linked (GlcNAc...) asparagine glycans are attached at residues Asn-4, Asn-8, and Asn-21. A helical membrane pass occupies residues 36–56; sequence MYAIIFVVALIGNSFVCYIVL. Residues 57 to 66 lie on the Cytoplasmic side of the membrane; sequence SSPPMRTVTN. Residues 67–87 form a helical membrane-spanning segment; it reads FFILNLAIGDVLITLLCVPFT. Residues 88 to 113 are Extracellular-facing; it reads SVSLLMQYWPFGGILCPVVNYSQALS. The N-linked (GlcNAc...) asparagine glycan is linked to Asn-107. A helical membrane pass occupies residues 114–134; that stretch reads VFVSAYTLVAISIDKYMIIMW. Residues 135 to 143 lie on the Cytoplasmic side of the membrane; sequence PLKPRISKR. A helical transmembrane segment spans residues 144 to 164; it reads FATYIIALVWLIAGITVLPSA. Topologically, residues 165–212 are extracellular; it reads TFTTLINDENILGTSAYEQCDKYICAEEYSKVGQEYGDLYTKVLMFLQ. Residues 213-233 traverse the membrane as a helical segment; that stretch reads YVIPSLVLLFTYTSIGVVIWC. Topologically, residues 234–258 are cytoplasmic; it reads HRIPGEAENSRDQRIAKNKTKMIKM. A helical membrane pass occupies residues 259-279; the sequence is MVTVVCVYTICWLPYNVLMIF. The Extracellular segment spans residues 280–282; it reads KEH. Residues 283 to 303 traverse the membrane as a helical segment; that stretch reads ISGSVMVYLYFPLHGLAMSHA. Topologically, residues 304–367 are cytoplasmic; the sequence is CYNPIIYCYM…EITRAQPTSA (64 aa).

Belongs to the G-protein coupled receptor 1 family.

The protein localises to the cell membrane. In terms of biological role, receptor for the neuropeptides RYamide-1 and RYamide-2. The activity of this receptor is mediated by G proteins which activate a phosphatidyl-inositol-calcium second messenger system. RYamide-2 is the most potent activator. This chain is RYamide receptor, found in Tribolium castaneum (Red flour beetle).